The following is a 522-amino-acid chain: Glutamate--cysteine ligase (522 aa).

The protein belongs to the glutamate--cysteine ligase type 1 family. Type 1 subfamily.

It catalyses the reaction L-cysteine + L-glutamate + ATP = gamma-L-glutamyl-L-cysteine + ADP + phosphate + H(+). It functions in the pathway sulfur metabolism; glutathione biosynthesis; glutathione from L-cysteine and L-glutamate: step 1/2. This chain is Glutamate--cysteine ligase, found in Shewanella pealeana (strain ATCC 700345 / ANG-SQ1).